The primary structure comprises 529 residues: Mannuronan C5-epimerase (529 aa).

The N-terminal stretch at 1-30 (MGACAMNPQALKGSAMLAAAMLLASGAAMA) is a signal peptide. 6 PbH1 repeats span residues 229-256 (GTET…SISQ), 291-313 (TTGF…DPHD), 315-338 (SHGL…IISR), 340-362 (VNDS…VLDR), 364-386 (SVNN…TLYE), and 387-409 (SGDN…RVRN). Catalysis depends on H312, which acts as the Proton acceptor.

This sequence belongs to the D-mannuronate C5-epimerase family.

It localises to the periplasm. The catalysed reaction is [(1-&gt;4)-beta-D-mannuronosyl](n) = [alginate](n). Its pathway is glycan biosynthesis; alginate biosynthesis. Catalyzes the epimerization of beta-D-mannuronate to alpha-L-guluronate during the synthesis of the linear polysaccharide alginate. In addition, is part of a periplasmic protein complex that protects alginate from degradation by AlgL by channeling the newly formed alginate polymer through a scaffold that transfers the alginate polymer through the periplasmic space to the outer membrane secretin AlgE. In Pseudomonas fluorescens, this protein is Mannuronan C5-epimerase.